A 339-amino-acid chain; its full sequence is Transcription factor IIIA (339 aa).

C2H2-type zinc fingers lie at residues 13–37 (YICS…LCKH), 43–67 (FPCK…SITH), 73–98 (FKCD…NRFH), 105–129 (YVCH…QFTH), 135–159 (YKCP…EKVH), 162–188 (YPCK…KECH), 192–214 (VMCD…KKTH), 221–246 (YCCP…QSFH), and 252–276 (FACE…SVVH). Composition is skewed to basic and acidic residues over residues 275–288 (VHDP…EKCP) and 305–316 (KSKEKSAAKATE). The disordered stretch occupies residues 275 to 339 (VHDPEKRKLK…ETKGSLVIEK (65 aa)).

Synthesized in oocytes and, in much lower levels, in somatic cells.

The protein localises to the nucleus. Its function is as follows. Involved in ribosomal large subunit biogenesis. Interacts with the internal control region (ICR) of approximately 50 bases within the 5S RNA genes, is required for correct transcription of these genes by RNA polymerase III. Also binds the transcribed 5S RNA's. The sequence is that of Transcription factor IIIA (gtf3a) from Xenopus borealis (Kenyan clawed frog).